We begin with the raw amino-acid sequence, 360 residues long: Peptide chain release factor 1 (360 aa).

Residue Gln235 is modified to N5-methylglutamine.

The protein belongs to the prokaryotic/mitochondrial release factor family. Post-translationally, methylated by PrmC. Methylation increases the termination efficiency of RF1.

It is found in the cytoplasm. Functionally, peptide chain release factor 1 directs the termination of translation in response to the peptide chain termination codons UAG and UAA. This chain is Peptide chain release factor 1, found in Burkholderia pseudomallei (strain 1106a).